Here is a 149-residue protein sequence, read N- to C-terminus: Calmodulin (149 aa).

N-acetylalanine is present on A2. EF-hand domains lie at 8-43 (EQIA…LGQN), 44-79 (PTEA…KMKD), 81-116 (DSEE…LGEK), and 117-149 (LTDE…MTSK). Ca(2+) is bound by residues D21, D23, D25, T27, E32, D57, D59, D61, T63, E68, D94, D96, N98, and E105. An N6,N6,N6-trimethyllysine modification is found at K116. 5 residues coordinate Ca(2+): D130, D132, D134, Q136, and E141.

It belongs to the calmodulin family.

In terms of biological role, calmodulin mediates the control of a large number of enzymes, ion channels and other proteins by Ca(2+). Among the enzymes to be stimulated by the calmodulin-Ca(2+) complex are a number of protein kinases and phosphatases. This chain is Calmodulin, found in Pyuridae sp. (Sea squirt).